We begin with the raw amino-acid sequence, 320 residues long: Malate dehydrogenase (320 aa).

Residues 10–15 (GAGQIG) and aspartate 34 each bind NAD(+). Positions 83 and 89 each coordinate substrate. Residues asparagine 96 and 119-121 (ITN) each bind NAD(+). Asparagine 121 and arginine 152 together coordinate substrate. Histidine 176 serves as the catalytic Proton acceptor.

This sequence belongs to the LDH/MDH superfamily. MDH type 3 family.

The catalysed reaction is (S)-malate + NAD(+) = oxaloacetate + NADH + H(+). Catalyzes the reversible oxidation of malate to oxaloacetate. The protein is Malate dehydrogenase of Ruegeria pomeroyi (strain ATCC 700808 / DSM 15171 / DSS-3) (Silicibacter pomeroyi).